The sequence spans 330 residues: MRHSVLFATAFATLISTQTFAADLPGKGITVNPVQSTITEETFQTLLVSRALEKLGYTVNKPSEVDYNVGYTSLASGDATFTAVNWTPLHDNMYEAAGGDKKFYREGVFVNGAAQGYLIDKKTADQYKITNIAQLKDPKIAKLFDTNGDGKADLTGCNPGWGCEGAINHQLAAYELTNTVTHNQGNYAAMMADTISRYKEGKPVFYYTWTPYWVSNELKPGKDVVWLQVPFSALPGDKNADTKLPNGANYGFPVSTMHIVANKAWAEKNPAAAKLFAIMQLPVADINAQNAIMHDGKASEGDIQGHVDGWIKAHQQQFDGWVNEALAAQK.

A signal peptide spans 1–21; it reads MRHSVLFATAFATLISTQTFA. Substrate is bound by residues Trp-86, His-90, and 161-163; that span reads WGC. Cys-157 and Cys-163 are disulfide-bonded.

In terms of assembly, the complex is composed of two ATP-binding proteins (ProV), two transmembrane proteins (ProW) and a solute-binding protein (ProX).

Its subcellular location is the periplasm. Functionally, part of the ProU ABC transporter complex involved in glycine betaine and proline betaine uptake. Binds glycine betaine and proline betaine with high affinity. The chain is Glycine betaine/proline betaine-binding periplasmic protein from Escherichia coli (strain K12).